The primary structure comprises 414 residues: 2-epi-5-epi-valiolone synthase (414 aa).

NAD(+) is bound by residues aspartate 70, 101–104, 134–138, 158–159, lysine 171, lysine 180, and 198–201; these read ESAK, GVLTD, TT, and FLAT. Lysine 171 is an active-site residue. The Zn(2+) site is built by glutamate 213, histidine 284, and histidine 300.

The protein belongs to the sugar phosphate cyclases superfamily. EEVS family. The cofactor is NAD(+). Zn(2+) serves as cofactor.

It carries out the reaction D-sedoheptulose 7-phosphate = 2-epi-5-epi-valiolone + phosphate. It functions in the pathway antibiotic biosynthesis. In terms of biological role, catalyzes the cyclization of D-sedoheptulose 7-phosphate to 2-epi-5-epi-valiolone. Involved in validamycin biosynthesis. The sequence is that of 2-epi-5-epi-valiolone synthase from Streptomyces hygroscopicus subsp. jinggangensis (strain 5008).